The primary structure comprises 224 residues: Probable proteasome subunit beta type-4 (224 aa).

This sequence belongs to the peptidase T1B family. As to quaternary structure, the 26S proteasome consists of a 20S proteasome core and two 19S regulatory subunits. The 20S proteasome core is composed of 28 subunits that are arranged in four stacked rings, resulting in a barrel-shaped structure. The two end rings are each formed by seven alpha subunits, and the two central rings are each formed by seven beta subunits. The catalytic chamber with the active sites is on the inside of the barrel.

The protein localises to the cytoplasm. It is found in the nucleus. Its function is as follows. Non-catalytic component of the proteasome, a multicatalytic proteinase complex which is characterized by its ability to cleave peptides with Arg, Phe, Tyr, Leu, and Glu adjacent to the leaving group at neutral or slightly basic pH. The proteasome has an ATP-dependent proteolytic activity. This is Probable proteasome subunit beta type-4 (CPR1) from Cryptococcus neoformans var. neoformans serotype D (strain B-3501A) (Filobasidiella neoformans).